The sequence spans 512 residues: Glucose-6-phosphate 1-dehydrogenase (512 aa).

NADP(+) is bound by residues R61, 103–104 (EF), and K171. Substrate contacts are provided by H201, K205, E239, and D258. Residue H263 is the Proton acceptor of the active site. The substrate site is built by K360 and K365. Positions 479–512 (QDSSPSFPNYPAGSSGPKEADALIERDGRSWRPL) are disordered. Over residues 496-512 (KEADALIERDGRSWRPL) the composition is skewed to basic and acidic residues.

It belongs to the glucose-6-phosphate dehydrogenase family.

The catalysed reaction is D-glucose 6-phosphate + NADP(+) = 6-phospho-D-glucono-1,5-lactone + NADPH + H(+). The protein operates within carbohydrate degradation; pentose phosphate pathway; D-ribulose 5-phosphate from D-glucose 6-phosphate (oxidative stage): step 1/3. Its function is as follows. Catalyzes the oxidation of glucose 6-phosphate to 6-phosphogluconolactone. In Chlamydia pneumoniae (Chlamydophila pneumoniae), this protein is Glucose-6-phosphate 1-dehydrogenase.